The sequence spans 259 residues: tRNA pseudouridine synthase A (259 aa).

The active-site Nucleophile is D51. Y109 contributes to the substrate binding site.

This sequence belongs to the tRNA pseudouridine synthase TruA family. As to quaternary structure, homodimer.

The catalysed reaction is uridine(38/39/40) in tRNA = pseudouridine(38/39/40) in tRNA. Formation of pseudouridine at positions 38, 39 and 40 in the anticodon stem and loop of transfer RNAs. The chain is tRNA pseudouridine synthase A from Nitrosococcus oceani (strain ATCC 19707 / BCRC 17464 / JCM 30415 / NCIMB 11848 / C-107).